Consider the following 367-residue polypeptide: 4-hydroxy-3-methylbut-2-en-1-yl diphosphate synthase (flavodoxin) (367 aa).

[4Fe-4S] cluster is bound by residues Cys-270, Cys-273, Cys-305, and Glu-312.

It belongs to the IspG family. It depends on [4Fe-4S] cluster as a cofactor.

It catalyses the reaction (2E)-4-hydroxy-3-methylbut-2-enyl diphosphate + oxidized [flavodoxin] + H2O + 2 H(+) = 2-C-methyl-D-erythritol 2,4-cyclic diphosphate + reduced [flavodoxin]. Its pathway is isoprenoid biosynthesis; isopentenyl diphosphate biosynthesis via DXP pathway; isopentenyl diphosphate from 1-deoxy-D-xylulose 5-phosphate: step 5/6. Its function is as follows. Converts 2C-methyl-D-erythritol 2,4-cyclodiphosphate (ME-2,4cPP) into 1-hydroxy-2-methyl-2-(E)-butenyl 4-diphosphate. This is 4-hydroxy-3-methylbut-2-en-1-yl diphosphate synthase (flavodoxin) from Buchnera aphidicola subsp. Schizaphis graminum (strain Sg).